Consider the following 175-residue polypeptide: Large ribosomal subunit protein uL10 (175 aa).

This sequence belongs to the universal ribosomal protein uL10 family. In terms of assembly, part of the ribosomal stalk of the 50S ribosomal subunit. The N-terminus interacts with L11 and the large rRNA to form the base of the stalk. The C-terminus forms an elongated spine to which L12 dimers bind in a sequential fashion forming a multimeric L10(L12)X complex.

Its function is as follows. Forms part of the ribosomal stalk, playing a central role in the interaction of the ribosome with GTP-bound translation factors. In Synechococcus elongatus (strain ATCC 33912 / PCC 7942 / FACHB-805) (Anacystis nidulans R2), this protein is Large ribosomal subunit protein uL10.